The primary structure comprises 94 residues: DNA-directed RNA polymerase subunit omega (94 aa).

Belongs to the RNA polymerase subunit omega family. The RNAP catalytic core consists of 2 alpha, 1 beta, 1 beta' and 1 omega subunit. When a sigma factor is associated with the core the holoenzyme is formed, which can initiate transcription.

It catalyses the reaction RNA(n) + a ribonucleoside 5'-triphosphate = RNA(n+1) + diphosphate. Its function is as follows. Promotes RNA polymerase assembly. Latches the N- and C-terminal regions of the beta' subunit thereby facilitating its interaction with the beta and alpha subunits. The protein is DNA-directed RNA polymerase subunit omega of Bifidobacterium longum subsp. infantis (strain ATCC 15697 / DSM 20088 / JCM 1222 / NCTC 11817 / S12).